Consider the following 147-residue polypeptide: UPF0306 protein YhbP (147 aa).

It belongs to the UPF0306 family.

The protein is UPF0306 protein YhbP of Shigella boydii serotype 4 (strain Sb227).